The sequence spans 145 residues: Transcription antitermination protein NusB (145 aa).

It belongs to the NusB family.

Functionally, involved in transcription antitermination. Required for transcription of ribosomal RNA (rRNA) genes. Binds specifically to the boxA antiterminator sequence of the ribosomal RNA (rrn) operons. The chain is Transcription antitermination protein NusB from Geotalea uraniireducens (strain Rf4) (Geobacter uraniireducens).